Reading from the N-terminus, the 336-residue chain is MKDRYILAFETSCDETSVAVLKNETELLSNVIASQIESHKRFGGVVPEVASRHHVEVITVCIEEALAEAGISEEQVTAVAVTYGPGLVGALLVGLAAAKSFAWAHDIPLIPVNHMAGHLMAAQSVEPLEFPLLALLVSGGHTELVYVSQAGDYKIVGETRDDAVGEAYDKVGRVMGLTYPAGREIDQLAHQGRDMYDFPRAMIKEDNLEFSFSGLKSAFINLHHNAQQKGEALSNQDLSASFQAAVMDILMAKTKKALEKYPVKTLVVAGGVAANQGLRERLAAEIQDVKVIIPPLRLCGDNAGMIAYASVSEWNKKNFAGLDLNAKPSLAFETME.

Residues His-114 and His-118 each contribute to the Fe cation site. Substrate-binding positions include 136–140 (LVSGG), Asp-169, Gly-182, Asp-186, and Asn-275. Asp-301 is a binding site for Fe cation.

Belongs to the KAE1 / TsaD family. Fe(2+) serves as cofactor.

The protein localises to the cytoplasm. It catalyses the reaction L-threonylcarbamoyladenylate + adenosine(37) in tRNA = N(6)-L-threonylcarbamoyladenosine(37) in tRNA + AMP + H(+). In terms of biological role, required for the formation of a threonylcarbamoyl group on adenosine at position 37 (t(6)A37) in tRNAs that read codons beginning with adenine. Is involved in the transfer of the threonylcarbamoyl moiety of threonylcarbamoyl-AMP (TC-AMP) to the N6 group of A37, together with TsaE and TsaB. TsaD likely plays a direct catalytic role in this reaction. This chain is tRNA N6-adenosine threonylcarbamoyltransferase, found in Streptococcus gordonii (strain Challis / ATCC 35105 / BCRC 15272 / CH1 / DL1 / V288).